The sequence spans 443 residues: ATP-dependent protease ATPase subunit HslU (443 aa).

ATP contacts are provided by residues Ile-18 and 60 to 65 (GVGKTE). The disordered stretch occupies residues 142-162 (LGFEASPSEESNATRQKFRKK). ATP is bound by residues Asp-256, Glu-321, and Arg-393.

Belongs to the ClpX chaperone family. HslU subfamily. A double ring-shaped homohexamer of HslV is capped on each side by a ring-shaped HslU homohexamer. The assembly of the HslU/HslV complex is dependent on binding of ATP.

Its subcellular location is the cytoplasm. ATPase subunit of a proteasome-like degradation complex; this subunit has chaperone activity. The binding of ATP and its subsequent hydrolysis by HslU are essential for unfolding of protein substrates subsequently hydrolyzed by HslV. HslU recognizes the N-terminal part of its protein substrates and unfolds these before they are guided to HslV for hydrolysis. This is ATP-dependent protease ATPase subunit HslU from Nitrosomonas europaea (strain ATCC 19718 / CIP 103999 / KCTC 2705 / NBRC 14298).